We begin with the raw amino-acid sequence, 288 residues long: Ubiquitin thioesterase otubain-like (288 aa).

An OTU domain is found at 76–275; the sequence is SHIRFIRGDG…PGHYDLIYKA (200 aa). Asp-84 is an active-site residue. Cys-87 (nucleophile) is an active-site residue. Ile-175 lines the substrate pocket. Active-site residues include His-244 and His-268.

This sequence belongs to the peptidase C65 family.

It catalyses the reaction Thiol-dependent hydrolysis of ester, thioester, amide, peptide and isopeptide bonds formed by the C-terminal Gly of ubiquitin (a 76-residue protein attached to proteins as an intracellular targeting signal).. Its function is as follows. Hydrolase that can remove conjugated ubiquitin from proteins and plays an important regulatory role at the level of protein turnover by preventing degradation. Specifically cleaves 'Lys-48'-linked polyubiquitin. The protein is Ubiquitin thioesterase otubain-like of Caenorhabditis briggsae.